The chain runs to 237 residues: Ubiquinone biosynthesis O-methyltransferase (237 aa).

The S-adenosyl-L-methionine site is built by Arg38, Gly57, Asp78, and Met122.

Belongs to the methyltransferase superfamily. UbiG/COQ3 family.

The catalysed reaction is a 3-demethylubiquinol + S-adenosyl-L-methionine = a ubiquinol + S-adenosyl-L-homocysteine + H(+). It carries out the reaction a 3-(all-trans-polyprenyl)benzene-1,2-diol + S-adenosyl-L-methionine = a 2-methoxy-6-(all-trans-polyprenyl)phenol + S-adenosyl-L-homocysteine + H(+). It functions in the pathway cofactor biosynthesis; ubiquinone biosynthesis. Its function is as follows. O-methyltransferase that catalyzes the 2 O-methylation steps in the ubiquinone biosynthetic pathway. In Methylococcus capsulatus (strain ATCC 33009 / NCIMB 11132 / Bath), this protein is Ubiquinone biosynthesis O-methyltransferase.